Here is a 193-residue protein sequence, read N- to C-terminus: Inner membrane protein p54 (193 aa).

The chain crosses the membrane as a helical span at residues tyrosine 32–phenylalanine 52. Positions proline 84–arginine 126 are disordered. A run of 4 repeats spans residues alanine 135 to serine 138, alanine 139 to serine 142, alanine 143 to serine 146, and alanine 147 to serine 150. A 4 X 4 AA tandem repeats of A-A-A-S region spans residues alanine 135–serine 150. Residues tyrosine 159–threonine 171 are interaction with host DYNLL1.

This sequence belongs to the asfivirus envelope protein p54 family. Interacts with the host light chain cytoplasmic dynein DYNLL1; this interaction is critical for intracellular microtubule-dependent virus transport toward viral factories.

It localises to the virion membrane. The protein resides in the host cytoplasm. Its subcellular location is the host cytoskeleton. It is found in the host endoplasmic reticulum membrane. Functionally, inner envelope protein involved, through its interaction with host dynein, in the intracellular microtubule-dependent transport of viral capsid toward viral factories. Seems to induce caspase-3 activation and apoptosis. Plays a role in virion morphogenesis by recruiting and transforming the host ER membranes into the precursors of the viral envelope. Involved in virus attachment to the host cell. The chain is Inner membrane protein p54 from Ornithodoros (relapsing fever ticks).